We begin with the raw amino-acid sequence, 760 residues long: Xaa-Pro dipeptidyl-peptidase (760 aa).

Residues Ser349, Asp469, and His499 each act as charge relay system in the active site.

It belongs to the peptidase S15 family. In terms of assembly, homodimer.

It localises to the cytoplasm. It carries out the reaction Hydrolyzes Xaa-Pro-|- bonds to release unblocked, N-terminal dipeptides from substrates including Ala-Pro-|-p-nitroanilide and (sequentially) Tyr-Pro-|-Phe-Pro-|-Gly-Pro-|-Ile.. In terms of biological role, removes N-terminal dipeptides sequentially from polypeptides having unsubstituted N-termini provided that the penultimate residue is proline. The sequence is that of Xaa-Pro dipeptidyl-peptidase from Streptococcus pyogenes serotype M18 (strain MGAS8232).